Here is a 404-residue protein sequence, read N- to C-terminus: Chorismate synthase (404 aa).

Residues arginine 40 and arginine 46 each contribute to the NADP(+) site. FMN contacts are provided by residues 133-135, 266-267, glycine 313, 328-332, and arginine 354; these read RSS, QA, and KPIPT. Residues 283–320 form a disordered region; sequence PGSQVHDPIEPREDGAQAYPRRTNHAGGTEGGTTTGMP. Residues 337-357 are disordered; it reads LDSVDTATGEPEPTRYERSDI.

Belongs to the chorismate synthase family. Homotetramer. FMNH2 serves as cofactor.

The catalysed reaction is 5-O-(1-carboxyvinyl)-3-phosphoshikimate = chorismate + phosphate. Its pathway is metabolic intermediate biosynthesis; chorismate biosynthesis; chorismate from D-erythrose 4-phosphate and phosphoenolpyruvate: step 7/7. Its function is as follows. Catalyzes the anti-1,4-elimination of the C-3 phosphate and the C-6 proR hydrogen from 5-enolpyruvylshikimate-3-phosphate (EPSP) to yield chorismate, which is the branch point compound that serves as the starting substrate for the three terminal pathways of aromatic amino acid biosynthesis. This reaction introduces a second double bond into the aromatic ring system. The chain is Chorismate synthase from Salinibacter ruber (strain DSM 13855 / M31).